The sequence spans 381 residues: 1-deoxy-D-xylulose 5-phosphate reductoisomerase (381 aa).

8 residues coordinate NADPH: threonine 10, glycine 11, serine 12, isoleucine 13, glycine 36, lysine 37, asparagine 38, and asparagine 122. Lysine 123 provides a ligand contact to 1-deoxy-D-xylulose 5-phosphate. NADPH is bound at residue glutamate 124. A Mn(2+)-binding site is contributed by aspartate 148. Positions 149, 150, 173, and 196 each coordinate 1-deoxy-D-xylulose 5-phosphate. Residue glutamate 150 participates in Mn(2+) binding. NADPH is bound at residue glycine 202. Serine 209, asparagine 214, lysine 215, and glutamate 218 together coordinate 1-deoxy-D-xylulose 5-phosphate. Mn(2+) is bound at residue glutamate 218.

Belongs to the DXR family. It depends on Mg(2+) as a cofactor. Mn(2+) serves as cofactor.

The enzyme catalyses 2-C-methyl-D-erythritol 4-phosphate + NADP(+) = 1-deoxy-D-xylulose 5-phosphate + NADPH + H(+). It functions in the pathway isoprenoid biosynthesis; isopentenyl diphosphate biosynthesis via DXP pathway; isopentenyl diphosphate from 1-deoxy-D-xylulose 5-phosphate: step 1/6. Its function is as follows. Catalyzes the NADPH-dependent rearrangement and reduction of 1-deoxy-D-xylulose-5-phosphate (DXP) to 2-C-methyl-D-erythritol 4-phosphate (MEP). The sequence is that of 1-deoxy-D-xylulose 5-phosphate reductoisomerase from Desulfitobacterium hafniense (strain DSM 10664 / DCB-2).